Here is a 122-residue protein sequence, read N- to C-terminus: Large ribosomal subunit protein uL14 (122 aa).

It belongs to the universal ribosomal protein uL14 family. Part of the 50S ribosomal subunit. Forms a cluster with proteins L3 and L19. In the 70S ribosome, L14 and L19 interact and together make contacts with the 16S rRNA in bridges B5 and B8.

In terms of biological role, binds to 23S rRNA. Forms part of two intersubunit bridges in the 70S ribosome. This is Large ribosomal subunit protein uL14 from Parvibaculum lavamentivorans (strain DS-1 / DSM 13023 / NCIMB 13966).